The sequence spans 149 residues: Large ribosomal subunit protein uL15 (149 aa).

Composition is skewed to basic residues over residues 1–14 (MPSR…HRGH) and 21–30 (RIGKHRKHPG). The disordered stretch occupies residues 1–39 (MPSRFTKTRKHRGHVSAGKGRIGKHRKHPGGRGMAGGQH). 2 short sequence motifs (nuclear localization signal) span residues 7–13 (KTRKHRG) and 24–30 (KHRKHPG). Lysine 96 participates in a covalent cross-link: Glycyl lysine isopeptide (Lys-Gly) (interchain with G-Cter in ubiquitin).

The protein belongs to the universal ribosomal protein uL15 family. In terms of assembly, component of the large ribosomal subunit (LSU). Mature yeast ribosomes consist of a small (40S) and a large (60S) subunit. The 40S small subunit contains 1 molecule of ribosomal RNA (18S rRNA) and 33 different proteins (encoded by 57 genes). The large 60S subunit contains 3 rRNA molecules (25S, 5.8S and 5S rRNA) and 46 different proteins (encoded by 81 genes).

The protein localises to the cytoplasm. In terms of biological role, component of the ribosome, a large ribonucleoprotein complex responsible for the synthesis of proteins in the cell. The small ribosomal subunit (SSU) binds messenger RNAs (mRNAs) and translates the encoded message by selecting cognate aminoacyl-transfer RNA (tRNA) molecules. The large subunit (LSU) contains the ribosomal catalytic site termed the peptidyl transferase center (PTC), which catalyzes the formation of peptide bonds, thereby polymerizing the amino acids delivered by tRNAs into a polypeptide chain. The nascent polypeptides leave the ribosome through a tunnel in the LSU and interact with protein factors that function in enzymatic processing, targeting, and the membrane insertion of nascent chains at the exit of the ribosomal tunnel. This is Large ribosomal subunit protein uL15 from Saccharomyces cerevisiae (strain ATCC 204508 / S288c) (Baker's yeast).